A 78-amino-acid polypeptide reads, in one-letter code: Large ribosomal subunit protein bL28 (78 aa).

Positions Met1–Ala21 are disordered.

It belongs to the bacterial ribosomal protein bL28 family.

This is Large ribosomal subunit protein bL28 from Shewanella halifaxensis (strain HAW-EB4).